Here is a 1165-residue protein sequence, read N- to C-terminus: Pesticidal crystal protein Cry1Da (1165 aa).

It belongs to the delta endotoxin family.

Functionally, promotes colloidosmotic lysis by binding to the midgut epithelial cells of many lepidopteran larvae. The polypeptide is Pesticidal crystal protein Cry1Da (cry1Da) (Bacillus thuringiensis subsp. aizawai).